Consider the following 44-residue polypeptide: Large ribosomal subunit protein bL34 (44 aa).

Positions 1-26 (MQRTLGGTNRKRKRTSGFRARMRTPD) are disordered. Residues 9 to 22 (NRKRKRTSGFRARM) show a composition bias toward basic residues.

The protein belongs to the bacterial ribosomal protein bL34 family.

In Trichormus variabilis (strain ATCC 29413 / PCC 7937) (Anabaena variabilis), this protein is Large ribosomal subunit protein bL34.